Consider the following 426-residue polypeptide: DNA polymerase processivity factor component OPG148 (426 aa).

This sequence belongs to the orthopoxvirus OPG148 family. Interacts with the DNA polymerase catalytic subunit OPG071. Interacts with UDG/OPG116. Component of the uracil-DNA glycosylase(UDG)-OPG148-polymerase complex; OPG148 and UDG form a heterodimeric processivity factor that associates with OPG071 to form the processive polymerase holoenzyme. Interacts with OPG117.

Functionally, plays an essential role in viral DNA replication by acting as the polymerase processivity factor together with protein OPG116. Serves as a bridge which links the DNA polymerase OPG071 and the uracil DNA glycosylase. The protein is DNA polymerase processivity factor component OPG148 (OPG148) of Cynomys gunnisoni (Gunnison's prairie dog).